We begin with the raw amino-acid sequence, 989 residues long: Vacuolar membrane protease (989 aa).

A disordered region spans residues 1-25 (MDRQSLRTTLRAMDASNENGSAKGA). The Cytoplasmic segment spans residues 1–41 (MDRQSLRTTLRAMDASNENGSAKGAKKTTIGSFVRWTFGFN). Residues 42–62 (SVPLTTLVTITTVLLGLLVYV) traverse the membrane as a helical segment. The Vacuolar segment spans residues 63–383 (STSVNPPDVT…YLFIILPLQY (321 aa)). Residues His181 and Asp193 each contribute to the Zn(2+) site. The Proton acceptor role is filled by Glu227. Glu228 lines the Zn(2+) pocket. Asn245 is a glycosylation site (N-linked (GlcNAc...) asparagine). Zn(2+)-binding residues include Glu253 and His325. The helical transmembrane segment at 384–404 (IFVISCLTLAVGPIFVGFLFL) threads the bilayer. The Cytoplasmic portion of the chain corresponds to 405 to 426 (LVLRKQINAGTSETILGGWLRS). Residues 427–447 (IVSVLVSVVATYFVVETLHLG) form a helical membrane-spanning segment. Residues 448–460 (NELYVVRSFYTPL) lie on the Vacuolar side of the membrane. The chain crosses the membrane as a helical span at residues 461–481 (FAGLGTFIFVNYVLLGFFHFV). Topologically, residues 482–488 (RPVCDQK) are cytoplasmic. A helical membrane pass occupies residues 489-509 (LIILLELSVVLWVLLLLSVIH). The Vacuolar segment spans residues 510–520 (EATHKATGEYH). The helical transmembrane segment at 521–541 (FLILYIVVATASILGLFGHLV) threads the bilayer. Residues 542-611 (TSTETSTFVE…IAVSMGYDWS (70 aa)) lie on the Cytoplasmic side of the membrane. A disordered region spans residues 548 to 576 (TFVEGPEDEEDTVDASEATETSPLLPEAS). Positions 552 to 561 (GPEDEEDTVD) are enriched in acidic residues. The chain crosses the membrane as a helical span at residues 612–632 (IQFLLVVPITFFVTFGLAASL). The Vacuolar segment spans residues 633–648 (LDGLHQTPLESEKSAD). A helical membrane pass occupies residues 649–669 (FVYTTITAMSVLVGITFLPFV). The Cytoplasmic segment spans residues 670–673 (HKLQ). The chain crosses the membrane as a helical span at residues 674–694 (VFVPIVVVGVAVTASFVHILS). Topologically, residues 695 to 989 (PPFSSNAPAK…LVEVSKYVEL (295 aa)) are vacuolar. Residues Asn745, Asn793, and Asn822 are each glycosylated (N-linked (GlcNAc...) asparagine).

This sequence belongs to the peptidase M28 family. It depends on Zn(2+) as a cofactor.

The protein resides in the vacuole membrane. In terms of biological role, may be involved in vacuolar sorting and osmoregulation. This chain is Vacuolar membrane protease, found in Yarrowia lipolytica (strain CLIB 122 / E 150) (Yeast).